Reading from the N-terminus, the 396-residue chain is S-adenosylmethionine decarboxylase proenzyme (396 aa).

Residues Glu-29 and Glu-32 contribute to the active site. Residue Ser-88 is the Schiff-base intermediate with substrate; via pyruvic acid of the active site. At Ser-88 the chain carries Pyruvic acid (Ser); by autocatalysis. The Proton donor; for catalytic activity role is filled by Cys-102. Active-site proton acceptor; for processing activity residues include Ser-287 and His-301.

The protein belongs to the eukaryotic AdoMetDC family. Pyruvate serves as cofactor. Post-translationally, is synthesized initially as an inactive proenzyme. Formation of the active enzyme involves a self-maturation process in which the active site pyruvoyl group is generated from an internal serine residue via an autocatalytic post-translational modification. Two non-identical subunits are generated from the proenzyme in this reaction, and the pyruvate is formed at the N-terminus of the alpha chain, which is derived from the carboxyl end of the proenzyme. The post-translation cleavage follows an unusual pathway, termed non-hydrolytic serinolysis, in which the side chain hydroxyl group of the serine supplies its oxygen atom to form the C-terminus of the beta chain, while the remainder of the serine residue undergoes an oxidative deamination to produce ammonia and the pyruvoyl group blocking the N-terminus of the alpha chain.

The enzyme catalyses S-adenosyl-L-methionine + H(+) = S-adenosyl 3-(methylsulfanyl)propylamine + CO2. Its pathway is amine and polyamine biosynthesis; S-adenosylmethioninamine biosynthesis; S-adenosylmethioninamine from S-adenosyl-L-methionine: step 1/1. Functionally, catalyzes the decarboxylation of S-adenosylmethionine, a key step in the biosynthetic pathway for spermidine and spermine. It is essential for normal growth, sporulation, and maintenance of ds-RNA virus. The protein is S-adenosylmethionine decarboxylase proenzyme (SPE2) of Saccharomyces cerevisiae (strain ATCC 204508 / S288c) (Baker's yeast).